A 661-amino-acid chain; its full sequence is Probable potassium transport system protein Kup 1 (661 aa).

A compositionally biased stretch (gly residues) spans M1–N11. A disordered region spans residues M1–G38. Helical transmembrane passes span L48–I68, I85–I105, A139–T159, A177–Q197, I207–I227, V251–Y271, W286–L306, L324–I344, L384–G404, A405–A425, T436–L456, and F458–S478.

The protein belongs to the HAK/KUP transporter (TC 2.A.72) family.

The protein localises to the cell inner membrane. It carries out the reaction K(+)(in) + H(+)(in) = K(+)(out) + H(+)(out). Its function is as follows. Transport of potassium into the cell. Likely operates as a K(+):H(+) symporter. The polypeptide is Probable potassium transport system protein Kup 1 (Syntrophobacter fumaroxidans (strain DSM 10017 / MPOB)).